The chain runs to 179 residues: Bifunctional protein PyrR (179 aa).

A PRPP-binding motif is present at residues 100 to 112 (VILVDDVLFTGRT).

It belongs to the purine/pyrimidine phosphoribosyltransferase family. PyrR subfamily. Homodimer and homohexamer; in equilibrium.

It carries out the reaction UMP + diphosphate = 5-phospho-alpha-D-ribose 1-diphosphate + uracil. Regulates transcriptional attenuation of the pyrimidine nucleotide (pyr) operon by binding in a uridine-dependent manner to specific sites on pyr mRNA. This disrupts an antiterminator hairpin in the RNA and favors formation of a downstream transcription terminator, leading to a reduced expression of downstream genes. Functionally, also displays a weak uracil phosphoribosyltransferase activity which is not physiologically significant. This Geobacillus sp. (strain WCH70) protein is Bifunctional protein PyrR.